A 148-amino-acid polypeptide reads, in one-letter code: MNLSNLKPAEGSTKTRKRIGRGPGSGLGGTSTRGHKGAKSRSGYKNKIGFEGGQMPIQRRLPKFGFKNINRVEYKAINIDTLQQMAEAKQLTKIGINELMEAGFISSSQVVKILGNGSLTAKLEVEAHAFSKSAEAAIQAAGGTVVKL.

The tract at residues 1–51 (MNLSNLKPAEGSTKTRKRIGRGPGSGLGGTSTRGHKGAKSRSGYKNKIGFE) is disordered. Over residues 21-31 (RGPGSGLGGTS) the composition is skewed to gly residues. Residues 33 to 44 (RGHKGAKSRSGY) are compositionally biased toward basic residues.

The protein belongs to the universal ribosomal protein uL15 family. Part of the 50S ribosomal subunit.

In terms of biological role, binds to the 23S rRNA. The protein is Large ribosomal subunit protein uL15 of Parabacteroides distasonis (strain ATCC 8503 / DSM 20701 / CIP 104284 / JCM 5825 / NCTC 11152).